Consider the following 958-residue polypeptide: Valine--tRNA ligase (958 aa).

Positions 42-52 match the 'HIGH' region motif; that stretch reads PNVTGSLHMGH. The 'KMSKS' region motif lies at 554 to 558; that stretch reads KMSKS. Lys557 lines the ATP pocket. Positions 887-956 form a coiled coil; that stretch reads LVDVAAEMAR…TEQKAEFAKL (70 aa).

Belongs to the class-I aminoacyl-tRNA synthetase family. ValS type 1 subfamily. In terms of assembly, monomer.

It is found in the cytoplasm. The enzyme catalyses tRNA(Val) + L-valine + ATP = L-valyl-tRNA(Val) + AMP + diphosphate. Functionally, catalyzes the attachment of valine to tRNA(Val). As ValRS can inadvertently accommodate and process structurally similar amino acids such as threonine, to avoid such errors, it has a 'posttransfer' editing activity that hydrolyzes mischarged Thr-tRNA(Val) in a tRNA-dependent manner. This chain is Valine--tRNA ligase, found in Shewanella oneidensis (strain ATCC 700550 / JCM 31522 / CIP 106686 / LMG 19005 / NCIMB 14063 / MR-1).